The primary structure comprises 122 residues: Large ribosomal subunit protein uL14 (122 aa).

Belongs to the universal ribosomal protein uL14 family. Part of the 50S ribosomal subunit. Forms a cluster with proteins L3 and L19. In the 70S ribosome, L14 and L19 interact and together make contacts with the 16S rRNA in bridges B5 and B8.

Its function is as follows. Binds to 23S rRNA. Forms part of two intersubunit bridges in the 70S ribosome. The polypeptide is Large ribosomal subunit protein uL14 (Acaryochloris marina (strain MBIC 11017)).